The primary structure comprises 299 residues: Diaminopimelate epimerase (299 aa).

Substrate-binding residues include N15, Q47, and N67. C76 (proton donor) is an active-site residue. Residues 77–78 (GN), N163, N197, and 215–216 (ER) each bind substrate. C224 serves as the catalytic Proton acceptor. 225–226 (GS) is a substrate binding site.

Belongs to the diaminopimelate epimerase family. As to quaternary structure, homodimer.

Its subcellular location is the cytoplasm. It catalyses the reaction (2S,6S)-2,6-diaminopimelate = meso-2,6-diaminopimelate. It functions in the pathway amino-acid biosynthesis; L-lysine biosynthesis via DAP pathway; DL-2,6-diaminopimelate from LL-2,6-diaminopimelate: step 1/1. In terms of biological role, catalyzes the stereoinversion of LL-2,6-diaminopimelate (L,L-DAP) to meso-diaminopimelate (meso-DAP), a precursor of L-lysine and an essential component of the bacterial peptidoglycan. This is Diaminopimelate epimerase from Agrobacterium fabrum (strain C58 / ATCC 33970) (Agrobacterium tumefaciens (strain C58)).